Reading from the N-terminus, the 294-residue chain is Ribosomal protein L11 methyltransferase (294 aa).

S-adenosyl-L-methionine is bound by residues threonine 146, glycine 167, aspartate 189, and asparagine 231.

Belongs to the methyltransferase superfamily. PrmA family.

The protein localises to the cytoplasm. It catalyses the reaction L-lysyl-[protein] + 3 S-adenosyl-L-methionine = N(6),N(6),N(6)-trimethyl-L-lysyl-[protein] + 3 S-adenosyl-L-homocysteine + 3 H(+). Its function is as follows. Methylates ribosomal protein L11. This is Ribosomal protein L11 methyltransferase from Photobacterium profundum (strain SS9).